Consider the following 140-residue polypeptide: Truncated tyrosine phosphatase D1 (140 aa).

Residues 1–140 (MRRPNCIAEI…SAQWIQFLKK (140 aa)) enclose the Tyrosine-protein phosphatase domain.

It belongs to the protein-tyrosine phosphatase family.

This is Truncated tyrosine phosphatase D1 (D1) from Microplitis demolitor bracovirus (isolate Webb) (MdBV).